Reading from the N-terminus, the 373-residue chain is MSGAVLLCLFFSINVGNIQWDLRYIPILLAFLYGGKRAGWGVAAIAVVGRIGQGGDLFLLGVVLIVLTALFYALCVNRFYMLPPRWSRIRYASLLVILPATIQTFGTLYLINYENHLSESWVAGWLYIVFLVVTVVLVTYLFETLLEKERIVAELVATEKDFTKGELAASIAHEVRNPLTVVKGFVQLLSEDKQHAEYHKLILSELDRAESIIYEFLNTTRPQTNATFHLNETAREVVALLTPYAQERSIQLTIGTCEQAIVNGNENKVKQALMNFVKNGIEASNEGDTVTIQLDRLKDRAQIEINDNGVGMSRQQLKQLGTAYFTTKESGNGIGTMVSIRIVEMMNGMVTFKSKPGKGTKVVLSLPIEKENE.

The next 4 helical transmembrane spans lie at 27-47, 57-77, 91-111, and 122-142; these read ILLAFLYGGKRAGWGVAAIAV, LFLLGVVLIVLTALFYALCVN, YASLLVILPATIQTFGTLYLI, and VAGWLYIVFLVVTVVLVTYLF. Residues 170–370 form the Histidine kinase domain; that stretch reads SIAHEVRNPL…KVVLSLPIEK (201 aa). At His-173 the chain carries Phosphohistidine; by autocatalysis.

The protein localises to the cell membrane. The catalysed reaction is ATP + protein L-histidine = ADP + protein N-phospho-L-histidine.. Functionally, involved in a sensory transduction pathway that enhances the production of minor proteases. The sequence is that of Sensor protein DegM (degM) from Bacillus sp. (strain B21-2).